A 452-amino-acid chain; its full sequence is Trigger factor (452 aa).

The PPIase FKBP-type domain occupies 170–256 (NSIVKVDFVE…IKSIKKRDLP (87 aa)).

It belongs to the FKBP-type PPIase family. Tig subfamily.

It is found in the cytoplasm. The enzyme catalyses [protein]-peptidylproline (omega=180) = [protein]-peptidylproline (omega=0). Involved in protein export. Acts as a chaperone by maintaining the newly synthesized protein in an open conformation. Functions as a peptidyl-prolyl cis-trans isomerase. The polypeptide is Trigger factor (Borrelia garinii subsp. bavariensis (strain ATCC BAA-2496 / DSM 23469 / PBi) (Borreliella bavariensis)).